Reading from the N-terminus, the 208-residue chain is N-(5'-phosphoribosyl)anthranilate isomerase (208 aa).

Belongs to the TrpF family.

The enzyme catalyses N-(5-phospho-beta-D-ribosyl)anthranilate = 1-(2-carboxyphenylamino)-1-deoxy-D-ribulose 5-phosphate. The protein operates within amino-acid biosynthesis; L-tryptophan biosynthesis; L-tryptophan from chorismate: step 3/5. The chain is N-(5'-phosphoribosyl)anthranilate isomerase from Neisseria meningitidis serogroup C / serotype 2a (strain ATCC 700532 / DSM 15464 / FAM18).